Reading from the N-terminus, the 108-residue chain is Competence protein ComGC (108 aa).

An N-terminal signal peptide occupies residues 1–13 (MKKMMTFLKKAKV). The interval 14–39 (KAFTLVEMLVVLLIISVLFLLFVPNL) is may be involved in polymerization of ComGC. The residue at position 16 (phenylalanine 16) is an N-methylphenylalanine. A helical membrane pass occupies residues 16–36 (FTLVEMLVVLLIISVLFLLFV).

Belongs to the ComGC family. As to quaternary structure, the transformation pili are flexible filaments, consisting mainly of the major pilin ComGC and smaller amounts of the minor pilins, including at least ComGD, ComGF and ComGG, and perhaps ComGE. Homodimer. Forms higher-order multimers. Interacts with ComGG; the interaction is probably direct. Undergoes proteolytic cleavage.

Its subcellular location is the cell membrane. The protein resides in the cell surface. The protein localises to the fimbrium. It localises to the secreted. Its function is as follows. Major component of the type IV-like pilus (T4P) that plays a role in transformation. Transformation pili are dynamically extended and retracted, perhaps thereby promoting DNA uptake and transformation. Required for transformation. Required for DNA binding. In Streptococcus pneumoniae serotype 4 (strain ATCC BAA-334 / TIGR4), this protein is Competence protein ComGC.